Reading from the N-terminus, the 341-residue chain is MKVKDFDFYLPEELIAQHPMEKRDEARLLVLDKETGEIEHKIFKDILDYLTPNDCLVLNNTRVLPARLIGAKEETGGKMEFLLLKRKEKDVWETLVKPGKRAQIGARFIFGNGELKAEVIGMGEEGSRIVKFYYEGIFEEILDQLGQMPLPPYIKEKLDDKEMYQTVYSKEEGSAAAPTAGLHFTEELLKKIKEKGVKLAFLTLHVGLGTFRPVKVEDIQEHVMHSEYYKMDKETAEIINDTKEKGGRVIAVGTTSCRTLETIGDIEGKVREQSGWTDIFIYPGYKYKVVDALITNFHLPQSTLLMLVSALAGRDNIMNAYNVAVEKEYRFFSFGDAMFIK.

This sequence belongs to the QueA family. Monomer.

Its subcellular location is the cytoplasm. It catalyses the reaction 7-aminomethyl-7-carbaguanosine(34) in tRNA + S-adenosyl-L-methionine = epoxyqueuosine(34) in tRNA + adenine + L-methionine + 2 H(+). It functions in the pathway tRNA modification; tRNA-queuosine biosynthesis. Transfers and isomerizes the ribose moiety from AdoMet to the 7-aminomethyl group of 7-deazaguanine (preQ1-tRNA) to give epoxyqueuosine (oQ-tRNA). The chain is S-adenosylmethionine:tRNA ribosyltransferase-isomerase from Clostridium botulinum (strain Loch Maree / Type A3).